We begin with the raw amino-acid sequence, 474 residues long: Lysosomal protective protein (474 aa).

An N-terminal signal peptide occupies residues 1 to 23 (MPGTALSPLLLLLLLSWASRNEA). Intrachain disulfides connect C83–C356, C235–C251, C236–C241, and C276–C325. The N-linked (GlcNAc...) (high mannose) asparagine glycan is linked to N140. S173 is a catalytic residue. N-linked (GlcNAc...) (high mannose) asparagine glycosylation is present at N327. Residues D394 and H451 contribute to the active site.

It belongs to the peptidase S10 family. In terms of assembly, heterodimer of a 32 kDa chain and a 20 kDa chain; disulfide-linked.

Its subcellular location is the lysosome. The catalysed reaction is Release of a C-terminal amino acid with broad specificity.. Protective protein appears to be essential for both the activity of beta-galactosidase and neuraminidase, it associates with these enzymes and exerts a protective function necessary for their stability and activity. This protein is also a carboxypeptidase and can deamidate tachykinins. The protein is Lysosomal protective protein (Ctsa) of Mus musculus (Mouse).